The sequence spans 124 residues: Small ribosomal subunit protein uS12 (124 aa).

Residues methionine 1–alanine 23 are disordered. 3-methylthioaspartic acid is present on aspartate 89. A disordered region spans residues alanine 101–serine 124. A compositionally biased stretch (basic residues) spans arginine 111 to serine 124.

The protein belongs to the universal ribosomal protein uS12 family. Part of the 30S ribosomal subunit. Contacts proteins S8 and S17. May interact with IF1 in the 30S initiation complex.

Functionally, with S4 and S5 plays an important role in translational accuracy. Interacts with and stabilizes bases of the 16S rRNA that are involved in tRNA selection in the A site and with the mRNA backbone. Located at the interface of the 30S and 50S subunits, it traverses the body of the 30S subunit contacting proteins on the other side and probably holding the rRNA structure together. The combined cluster of proteins S8, S12 and S17 appears to hold together the shoulder and platform of the 30S subunit. The sequence is that of Small ribosomal subunit protein uS12 from Chromohalobacter salexigens (strain ATCC BAA-138 / DSM 3043 / CIP 106854 / NCIMB 13768 / 1H11).